The following is a 180-amino-acid chain: Superoxide dismutase [Cu-Zn] (180 aa).

Residues 1 to 19 form the signal peptide; that stretch reads MFMNLLTQVSNAIFPQVEA. Cu cation contacts are provided by H68, H70, and H85. An intrachain disulfide couples C79 to C171. Positions 85, 93, 102, and 105 each coordinate Zn(2+). H142 is a binding site for Cu cation.

Belongs to the Cu-Zn superoxide dismutase family. Homodimer. It depends on Cu cation as a cofactor. Zn(2+) serves as cofactor.

Its subcellular location is the cytoplasm. The enzyme catalyses 2 superoxide + 2 H(+) = H2O2 + O2. With respect to regulation, the insertion of copper which activates the protein requires glutathione. This is independent of copper chaperone for SOD1 (CCS), which activates orthologs. In terms of biological role, protects cells against oxidative stress by converting superoxide radicals to hydrogen peroxide. Required for normal brood size. May be involved in regulating mpk-1 phosphorylation downstream of phosphatase ptp-2 during oocyte maturation. The chain is Superoxide dismutase [Cu-Zn] (sod-1) from Caenorhabditis elegans.